A 354-amino-acid chain; its full sequence is tRNA N6-adenosine threonylcarbamoyltransferase (354 aa).

Residues H111 and H115 each coordinate Fe cation. Substrate contacts are provided by residues 134–138, D167, G180, and N279; that span reads LVSGG. D319 lines the Fe cation pocket.

It belongs to the KAE1 / TsaD family. Fe(2+) serves as cofactor.

Its subcellular location is the cytoplasm. It carries out the reaction L-threonylcarbamoyladenylate + adenosine(37) in tRNA = N(6)-L-threonylcarbamoyladenosine(37) in tRNA + AMP + H(+). Functionally, required for the formation of a threonylcarbamoyl group on adenosine at position 37 (t(6)A37) in tRNAs that read codons beginning with adenine. Is involved in the transfer of the threonylcarbamoyl moiety of threonylcarbamoyl-AMP (TC-AMP) to the N6 group of A37, together with TsaE and TsaB. TsaD likely plays a direct catalytic role in this reaction. The protein is tRNA N6-adenosine threonylcarbamoyltransferase of Neisseria gonorrhoeae (strain ATCC 700825 / FA 1090).